The sequence spans 283 residues: Arsenite methyltransferase (283 aa).

Belongs to the methyltransferase superfamily. Arsenite methyltransferase family.

The catalysed reaction is arsenic triglutathione + [thioredoxin]-dithiol + S-adenosyl-L-methionine + 2 H2O = methylarsonous acid + [thioredoxin]-disulfide + 3 glutathione + S-adenosyl-L-homocysteine + H(+). The enzyme catalyses arsenic triglutathione + 2 [thioredoxin]-dithiol + 2 S-adenosyl-L-methionine + H2O = dimethylarsinous acid + 2 [thioredoxin]-disulfide + 3 glutathione + 2 S-adenosyl-L-homocysteine + 2 H(+). It catalyses the reaction arsenic triglutathione + 3 [thioredoxin]-dithiol + 3 S-adenosyl-L-methionine = trimethylarsine + 3 [thioredoxin]-disulfide + 3 glutathione + 3 S-adenosyl-L-homocysteine + 3 H(+). Catalyzes the transfer of a methyl group from AdoMet to arsenite, producing methylated arsenicals. Involved in the conversion of As(III) to a number of di- and trimethylated species, with trimethylarsine as the end product. Reduces the arsenic toxicity in the cell and may contribute to the global arsenic cycling. The sequence is that of Arsenite methyltransferase from Rhodopseudomonas palustris (strain ATCC BAA-98 / CGA009).